Reading from the N-terminus, the 435-residue chain is Ribulose bisphosphate carboxylase large chain (435 aa).

N104 and T154 together coordinate substrate. The active-site Proton acceptor is the K156. K158 serves as a coordination point for substrate. Mg(2+) is bound by residues K182, D184, and E185. K182 carries the N6-carboxylysine modification. Residue H275 is the Proton acceptor of the active site. Substrate is bound by residues R276, H308, and S360.

The protein belongs to the RuBisCO large chain family. Type I subfamily. Heterohexadecamer of 8 large chains and 8 small chains. Mg(2+) is required as a cofactor.

It localises to the plastid. It is found in the chloroplast. The catalysed reaction is 2 (2R)-3-phosphoglycerate + 2 H(+) = D-ribulose 1,5-bisphosphate + CO2 + H2O. The enzyme catalyses D-ribulose 1,5-bisphosphate + O2 = 2-phosphoglycolate + (2R)-3-phosphoglycerate + 2 H(+). Its function is as follows. RuBisCO catalyzes two reactions: the carboxylation of D-ribulose 1,5-bisphosphate, the primary event in carbon dioxide fixation, as well as the oxidative fragmentation of the pentose substrate in the photorespiration process. Both reactions occur simultaneously and in competition at the same active site. This is Ribulose bisphosphate carboxylase large chain from Euglena pisciformis.